The following is a 545-amino-acid chain: B3 domain-containing protein Os03g0620500 (545 aa).

Residues 26-119 (MKCFHRQMSA…RRASGVQERN (94 aa)) constitute a DNA-binding region (TF-B3 1). The segment at 111 to 188 (RASGVQERNA…SSSEHESSYD (78 aa)) is disordered. A compositionally biased stretch (basic and acidic residues) spans 173-186 (EEAKESSSSEHESS). The TF-B3 2 DNA-binding region spans 231 to 331 (VTTMKHSNVN…RATVHLLRET (101 aa)). Residues 368-400 (RRGTMEPSTTNVKKEADNEQCNNGQGKRQEPLN) are disordered. Residues 441–542 (YVSIMNKSNV…AMKVHIIRHN (102 aa)) constitute a DNA-binding region (TF-B3 3).

It is found in the nucleus. In Oryza sativa subsp. japonica (Rice), this protein is B3 domain-containing protein Os03g0620500.